A 396-amino-acid polypeptide reads, in one-letter code: Seminal vesicle major clotting proteins (396 aa).

The signal sequence occupies residues 1 to 21; the sequence is MKSTIFFILSLLLMLENQAAG. The segment at 45-178 is disordered; that stretch reads MEEAVSGSGL…ASSVDHRKKG (134 aa). Residues 60 to 152 are compositionally biased toward basic and acidic residues; that stretch reads RGSDREESVG…RVSVRHERVE (93 aa). SVP-3/-4 repeat repeat units follow at residues 65 to 88, 89 to 112, and 113 to 136; these read EESV…RSSV, EEPE…RHNV, and EEPE…RHSA. The SVP-3/-4 repeat; truncated repeat unit spans residues 137-157; it reads EEPEGERVSVRHERVEKTHKR. A propeptide spanning residues 177 to 192 is cleaved from the precursor; the sequence is KGHIRFKRQDPIAALA. SVP-1 clotting repeat units lie at residues 194–217, 218–241, 242–265, 266–289, 290–313, 314–337, 338–361, and 362–385; these read IEGQ…ERFS, VKGQ…ERFS, VTGQ…ERFS, MTGQ…ERFS, and VSGQ…SGFS. Positions 194 to 396 are 9 X tandem repeats of SVP-1 like motif; that stretch reads IEGQDAVKDS…KGQGSLKGLI (203 aa). Residues 377 to 396 form a disordered region; it reads QESVQSGFSVKGQGSLKGLI. The stretch at 386-396 is one SVP-1 clotting 9; truncated repeat; it reads VKGQGSLKGLI.

To the SVP-2 precursor, particularly in regions where protein processing must occur. In terms of processing, SVP-3 may be a post-translationally modified form of SVP-4. Covalent clotting of SVP-1 is catalyzed by a transglutaminase secreted by the anterior prostate through the formation of gamma-glutamyl-epsilon-lysine cross-links. The conserved 2 Lys and 1 Gln residues per functional unit seem to be the residues involved in the formation of those cross-links.

It is found in the secreted. Its function is as follows. SVP-1 serves as substrate in the formation of the copulatory plug. SVP-3 and SVP-4 may also contribute to the clot. The sequence is that of Seminal vesicle major clotting proteins from Cavia porcellus (Guinea pig).